Consider the following 462-residue polypeptide: Glutamate--tRNA ligase 1 (462 aa).

Positions 8–18 (PSPTGYLHIGG) match the 'HIGH' region motif. The short motif at 237–241 (KLSKR) is the 'KMSKS' region element. Lys-240 is a binding site for ATP.

The protein belongs to the class-I aminoacyl-tRNA synthetase family. Glutamate--tRNA ligase type 1 subfamily. In terms of assembly, monomer.

The protein localises to the cytoplasm. It carries out the reaction tRNA(Glu) + L-glutamate + ATP = L-glutamyl-tRNA(Glu) + AMP + diphosphate. Functionally, catalyzes the attachment of glutamate to tRNA(Glu) in a two-step reaction: glutamate is first activated by ATP to form Glu-AMP and then transferred to the acceptor end of tRNA(Glu). This Campylobacter hominis (strain ATCC BAA-381 / DSM 21671 / CCUG 45161 / LMG 19568 / NCTC 13146 / CH001A) protein is Glutamate--tRNA ligase 1.